We begin with the raw amino-acid sequence, 422 residues long: tRNA hydroxylation protein P (422 aa).

The N-terminal stretch at 1 to 58 (MNQVELLSPAGNLKKLKIALNYGADAVYGGVSHFSLRNRAGKEFTLETFKEGIDYAHA) is a signal peptide.

Belongs to the peptidase U32 family.

Involved in prephenate-dependent formation of 5-hydroxyuridine (ho5U) modification at position 34 in tRNAs, the first step in 5-carboxymethoxyuridine (cmo5U) biosynthesis. The polypeptide is tRNA hydroxylation protein P (Helicobacter pylori (strain ATCC 700392 / 26695) (Campylobacter pylori)).